We begin with the raw amino-acid sequence, 236 residues long: Large ribosomal subunit protein uL1 (236 aa).

Belongs to the universal ribosomal protein uL1 family. In terms of assembly, part of the 50S ribosomal subunit.

Binds directly to 23S rRNA. The L1 stalk is quite mobile in the ribosome, and is involved in E site tRNA release. In terms of biological role, protein L1 is also a translational repressor protein, it controls the translation of the L11 operon by binding to its mRNA. The protein is Large ribosomal subunit protein uL1 of Acidobacterium capsulatum (strain ATCC 51196 / DSM 11244 / BCRC 80197 / JCM 7670 / NBRC 15755 / NCIMB 13165 / 161).